We begin with the raw amino-acid sequence, 213 residues long: Thiamine-phosphate synthase (213 aa).

Residues 38 to 42 (QLREK) and D70 each bind 4-amino-2-methyl-5-(diphosphooxymethyl)pyrimidine. Mg(2+)-binding residues include D71 and E90. S109 serves as a coordination point for 4-amino-2-methyl-5-(diphosphooxymethyl)pyrimidine. Residue 135–137 (TQT) coordinates 2-[(2R,5Z)-2-carboxy-4-methylthiazol-5(2H)-ylidene]ethyl phosphate. 4-amino-2-methyl-5-(diphosphooxymethyl)pyrimidine is bound at residue K138. 2-[(2R,5Z)-2-carboxy-4-methylthiazol-5(2H)-ylidene]ethyl phosphate is bound by residues G165 and 185–186 (VS).

The protein belongs to the thiamine-phosphate synthase family. The cofactor is Mg(2+).

The catalysed reaction is 2-[(2R,5Z)-2-carboxy-4-methylthiazol-5(2H)-ylidene]ethyl phosphate + 4-amino-2-methyl-5-(diphosphooxymethyl)pyrimidine + 2 H(+) = thiamine phosphate + CO2 + diphosphate. It catalyses the reaction 2-(2-carboxy-4-methylthiazol-5-yl)ethyl phosphate + 4-amino-2-methyl-5-(diphosphooxymethyl)pyrimidine + 2 H(+) = thiamine phosphate + CO2 + diphosphate. It carries out the reaction 4-methyl-5-(2-phosphooxyethyl)-thiazole + 4-amino-2-methyl-5-(diphosphooxymethyl)pyrimidine + H(+) = thiamine phosphate + diphosphate. It functions in the pathway cofactor biosynthesis; thiamine diphosphate biosynthesis; thiamine phosphate from 4-amino-2-methyl-5-diphosphomethylpyrimidine and 4-methyl-5-(2-phosphoethyl)-thiazole: step 1/1. Condenses 4-methyl-5-(beta-hydroxyethyl)thiazole monophosphate (THZ-P) and 2-methyl-4-amino-5-hydroxymethyl pyrimidine pyrophosphate (HMP-PP) to form thiamine monophosphate (TMP). The sequence is that of Thiamine-phosphate synthase from Lacticaseibacillus paracasei (strain ATCC 334 / BCRC 17002 / CCUG 31169 / CIP 107868 / KCTC 3260 / NRRL B-441) (Lactobacillus paracasei).